Here is a 155-residue protein sequence, read N- to C-terminus: Large ribosomal subunit protein uL13 (155 aa).

This sequence belongs to the universal ribosomal protein uL13 family. In terms of assembly, part of the 50S ribosomal subunit.

Its function is as follows. This protein is one of the early assembly proteins of the 50S ribosomal subunit, although it is not seen to bind rRNA by itself. It is important during the early stages of 50S assembly. This Rickettsia akari (strain Hartford) protein is Large ribosomal subunit protein uL13.